A 351-amino-acid chain; its full sequence is Probable dual-specificity RNA methyltransferase RlmN (351 aa).

Glu-97 (proton acceptor) is an active-site residue. The region spanning 103 to 337 (YDYGNTVCIS…VTVRKERGVD (235 aa)) is the Radical SAM core domain. Cys-110 and Cys-342 are oxidised to a cystine. Cys-117, Cys-121, and Cys-124 together coordinate [4Fe-4S] cluster. Residues 166 to 167 (GE), Ser-198, 221 to 223 (SLH), and Asn-299 each bind S-adenosyl-L-methionine. The S-methylcysteine intermediate role is filled by Cys-342.

It belongs to the radical SAM superfamily. RlmN family. The cofactor is [4Fe-4S] cluster.

The protein resides in the cytoplasm. The catalysed reaction is adenosine(2503) in 23S rRNA + 2 reduced [2Fe-2S]-[ferredoxin] + 2 S-adenosyl-L-methionine = 2-methyladenosine(2503) in 23S rRNA + 5'-deoxyadenosine + L-methionine + 2 oxidized [2Fe-2S]-[ferredoxin] + S-adenosyl-L-homocysteine. It carries out the reaction adenosine(37) in tRNA + 2 reduced [2Fe-2S]-[ferredoxin] + 2 S-adenosyl-L-methionine = 2-methyladenosine(37) in tRNA + 5'-deoxyadenosine + L-methionine + 2 oxidized [2Fe-2S]-[ferredoxin] + S-adenosyl-L-homocysteine. Its function is as follows. Specifically methylates position 2 of adenine 2503 in 23S rRNA and position 2 of adenine 37 in tRNAs. This chain is Probable dual-specificity RNA methyltransferase RlmN, found in Natranaerobius thermophilus (strain ATCC BAA-1301 / DSM 18059 / JW/NM-WN-LF).